Here is a 592-residue protein sequence, read N- to C-terminus: Insulin-like growth factor 2 mRNA-binding protein 2 (592 aa).

2 RRM domains span residues 3–76 and 82–157; these read NKLY…YSVS and RRIQ…YIPD. Phosphoserine is present on Ser11. The interval 157 to 182 is disordered; sequence DEEVSSPSPPHRAREQGHGPGSSSQA. Ser162 and Ser164 each carry phosphoserine. 4 KH domains span residues 186–251, 267–334, 420–485, and 502–568; these read DFPL…CRMI, EVPL…EIEI, QETV…QGRI, and KLEA…QRKI. Thr543 carries the phosphothreonine modification.

Belongs to the RRM IMP/VICKZ family. In terms of assembly, can form homooligomers and heterooligomers with IGF2BP1 and IGF2BP3 in an RNA-dependent manner. Interacts with HNRPD. Interacts with IGF2BP1. Interacts with ELAVL1, DHX9, HNRNPU, MATR3 and PABPC1. Expressed in oocytes, granulosa cells of small and growing follicles and Leydig cells of the testis (at protein level). Expressed in testis and ovary.

It localises to the nucleus. It is found in the cytoplasm. Its subcellular location is the P-body. The protein localises to the stress granule. Its function is as follows. RNA-binding factor that recruits target transcripts to cytoplasmic protein-RNA complexes (mRNPs). This transcript 'caging' into mRNPs allows mRNA transport and transient storage. It also modulates the rate and location at which target transcripts encounter the translational apparatus and shields them from endonuclease attacks or microRNA-mediated degradation. Preferentially binds to N6-methyladenosine (m6A)-containing mRNAs and increases their stability. Binds to the 5'-UTR of the insulin-like growth factor 2 (IGF2) mRNAs. Binding is isoform-specific. Binds to beta-actin/ACTB and MYC transcripts. Increases MYC mRNA stability by binding to the coding region instability determinant (CRD) and binding is enhanced by m6A-modification of the CRD. The chain is Insulin-like growth factor 2 mRNA-binding protein 2 (Igf2bp2) from Mus musculus (Mouse).